The sequence spans 512 residues: ATP synthase subunit alpha (512 aa).

169–176 (GDRQTGKT) serves as a coordination point for ATP.

Belongs to the ATPase alpha/beta chains family. In terms of assembly, F-type ATPases have 2 components, CF(1) - the catalytic core - and CF(0) - the membrane proton channel. CF(1) has five subunits: alpha(3), beta(3), gamma(1), delta(1), epsilon(1). CF(0) has three main subunits: a(1), b(2) and c(9-12). The alpha and beta chains form an alternating ring which encloses part of the gamma chain. CF(1) is attached to CF(0) by a central stalk formed by the gamma and epsilon chains, while a peripheral stalk is formed by the delta and b chains.

The protein localises to the cell inner membrane. It carries out the reaction ATP + H2O + 4 H(+)(in) = ADP + phosphate + 5 H(+)(out). Its function is as follows. Produces ATP from ADP in the presence of a proton gradient across the membrane. The alpha chain is a regulatory subunit. This chain is ATP synthase subunit alpha, found in Orientia tsutsugamushi (strain Ikeda) (Rickettsia tsutsugamushi).